A 220-amino-acid chain; its full sequence is FMN-dependent NADH:quinone oxidoreductase 1 (220 aa).

18 to 20 (SVS) contacts FMN.

It belongs to the azoreductase type 1 family. As to quaternary structure, homodimer. The cofactor is FMN.

It catalyses the reaction 2 a quinone + NADH + H(+) = 2 a 1,4-benzosemiquinone + NAD(+). It carries out the reaction N,N-dimethyl-1,4-phenylenediamine + anthranilate + 2 NAD(+) = 2-(4-dimethylaminophenyl)diazenylbenzoate + 2 NADH + 2 H(+). Its function is as follows. Quinone reductase that provides resistance to thiol-specific stress caused by electrophilic quinones. In terms of biological role, also exhibits azoreductase activity. Catalyzes the reductive cleavage of the azo bond in aromatic azo compounds to the corresponding amines. This chain is FMN-dependent NADH:quinone oxidoreductase 1, found in Bacillus anthracis.